The following is a 135-amino-acid chain: MLSPKKVKHRKVQKGRMQGVARRGGVLNFGQFGLQALECGFVTNRQIEAARIAMTRHVKRGGKIWIRIFPDKPFTKKPAEVRMGKGKGAPEGWVAVIKPGRILYEMDGVSYELAAEALRLAAHKLPIKTKIVARS.

Belongs to the universal ribosomal protein uL16 family. As to quaternary structure, part of the 50S ribosomal subunit.

Its function is as follows. Binds 23S rRNA and is also seen to make contacts with the A and possibly P site tRNAs. The sequence is that of Large ribosomal subunit protein uL16 from Desulfatibacillum aliphaticivorans.